The primary structure comprises 224 residues: Phosphoribosyltransferase domain-containing protein 1 (224 aa).

Mg(2+) contacts are provided by Glu140 and Asp141. GMP is bound by residues 140–148 (EDIINTGRT), Lys172, 193–194 (FV), and Asp200. Position 200 (Asp200) interacts with Mg(2+).

It belongs to the purine/pyrimidine phosphoribosyltransferase family.

The chain is Phosphoribosyltransferase domain-containing protein 1 (prtfdc1) from Xenopus tropicalis (Western clawed frog).